Reading from the N-terminus, the 486-residue chain is MSTFYTVISWLLVFSYWLLIAGVTLRILMKRRAVPSAMAWLLVIYILPLVGIVAYLSFGELHLGKRRAERASKMWPSTAKWLRELKEYRRIFATENSEVASALFQLCERRQGVGGVKGNQLQLMTTFDDTIKALLRDIELARNNIEMVFYIWQPGGLVEQVTSSLISAARRGVHCRILLDSAGSVQFFRQHHPELMRTAGIEVVEALKVNLFRAFLRRMDLRQHRKIILIDSRIAYTGSMNMVDPRLFKQDAGVGQWIDLMARIEGPVATTLGIIYCCDWEMETGKRLLPPPPDVNVMPFEQESGHTIQVIASGPGYPEEMIHQALLTSVYSARKQLIMTTPYFVPSDDLLHAICTAAQRGVDVSIIVPHKNDSVLVGWASRAFFTELLAAGVKIYQFKDGLLHTKSVLVDGQLSLVGTVNLDMRSLWLNFEITLVIDDAGFGSDLACVQEDYIARSRLLNATQWQNRPYWQRIVERLFYFFSPLL.

2 helical membrane passes run 3–23 (TFYTVISWLLVFSYWLLIAGV) and 38–58 (MAWLLVIYILPLVGIVAYLSF). 2 consecutive PLD phosphodiesterase domains span residues 219 to 246 (MDLRQHRKIILIDSRIAYTGSMNMVDPR) and 399 to 426 (KDGLLHTKSVLVDGQLSLVGTVNLDMRS). Catalysis depends on residues His-224, Lys-226, Asp-231, His-404, Lys-406, and Asp-411.

The protein belongs to the phospholipase D family. Cardiolipin synthase subfamily. ClsA sub-subfamily.

Its subcellular location is the cell inner membrane. It catalyses the reaction 2 a 1,2-diacyl-sn-glycero-3-phospho-(1'-sn-glycerol) = a cardiolipin + glycerol. Catalyzes the reversible phosphatidyl group transfer from one phosphatidylglycerol molecule to another to form cardiolipin (CL) (diphosphatidylglycerol) and glycerol. In Pectobacterium atrosepticum (strain SCRI 1043 / ATCC BAA-672) (Erwinia carotovora subsp. atroseptica), this protein is Cardiolipin synthase A.